A 692-amino-acid chain; its full sequence is Elongation factor G (692 aa).

The tr-type G domain maps to 8–283 (DKYRNIGIMA…AVVDYMPSPL (276 aa)). Residues 17 to 24 (AHIDAGKT), 81 to 85 (DTPGH), and 135 to 138 (NKMD) contribute to the GTP site.

It belongs to the TRAFAC class translation factor GTPase superfamily. Classic translation factor GTPase family. EF-G/EF-2 subfamily.

The protein resides in the cytoplasm. Functionally, catalyzes the GTP-dependent ribosomal translocation step during translation elongation. During this step, the ribosome changes from the pre-translocational (PRE) to the post-translocational (POST) state as the newly formed A-site-bound peptidyl-tRNA and P-site-bound deacylated tRNA move to the P and E sites, respectively. Catalyzes the coordinated movement of the two tRNA molecules, the mRNA and conformational changes in the ribosome. In Trichlorobacter lovleyi (strain ATCC BAA-1151 / DSM 17278 / SZ) (Geobacter lovleyi), this protein is Elongation factor G.